A 377-amino-acid chain; its full sequence is GTP 3',8-cyclase (377 aa).

Residues 1–29 form a disordered region; the sequence is MTTRLYLSPTPPRNDREGASKSTSASIKH. A Radical SAM core domain is found at 45 to 271; that stretch reads RFGRIARDLR…FTLSPAKEPR (227 aa). Arg54 is a binding site for GTP. Cys61 and Cys65 together coordinate [4Fe-4S] cluster. Tyr67 serves as a coordination point for S-adenosyl-L-methionine. Cys68 contacts [4Fe-4S] cluster. Residue Arg105 participates in GTP binding. Gly109 is a binding site for S-adenosyl-L-methionine. A GTP-binding site is contributed by Thr140. Ser164 contacts S-adenosyl-L-methionine. Position 201 (Lys201) interacts with GTP. Position 235 (Met235) interacts with S-adenosyl-L-methionine. Cys304 and Cys307 together coordinate [4Fe-4S] cluster. Residue 309-311 participates in GTP binding; sequence RSR. Cys321 lines the [4Fe-4S] cluster pocket.

It belongs to the radical SAM superfamily. MoaA family. Monomer and homodimer. Requires [4Fe-4S] cluster as cofactor.

The catalysed reaction is GTP + AH2 + S-adenosyl-L-methionine = (8S)-3',8-cyclo-7,8-dihydroguanosine 5'-triphosphate + 5'-deoxyadenosine + L-methionine + A + H(+). It participates in cofactor biosynthesis; molybdopterin biosynthesis. Catalyzes the cyclization of GTP to (8S)-3',8-cyclo-7,8-dihydroguanosine 5'-triphosphate. This Corynebacterium glutamicum (strain ATCC 13032 / DSM 20300 / JCM 1318 / BCRC 11384 / CCUG 27702 / LMG 3730 / NBRC 12168 / NCIMB 10025 / NRRL B-2784 / 534) protein is GTP 3',8-cyclase.